The chain runs to 1072 residues: DNA-directed RNA polymerase subunit beta (1072 aa).

This sequence belongs to the RNA polymerase beta chain family. As to quaternary structure, in plastids the minimal PEP RNA polymerase catalytic core is composed of four subunits: alpha, beta, beta', and beta''. When a (nuclear-encoded) sigma factor is associated with the core the holoenzyme is formed, which can initiate transcription.

The protein resides in the plastid. The protein localises to the chloroplast. The enzyme catalyses RNA(n) + a ribonucleoside 5'-triphosphate = RNA(n+1) + diphosphate. In terms of biological role, DNA-dependent RNA polymerase catalyzes the transcription of DNA into RNA using the four ribonucleoside triphosphates as substrates. This Lobularia maritima (Sweet alyssum) protein is DNA-directed RNA polymerase subunit beta.